The primary structure comprises 341 residues: Phosphoribosylformylglycinamidine cyclo-ligase (341 aa).

This sequence belongs to the AIR synthase family.

The protein resides in the cytoplasm. The catalysed reaction is 2-formamido-N(1)-(5-O-phospho-beta-D-ribosyl)acetamidine + ATP = 5-amino-1-(5-phospho-beta-D-ribosyl)imidazole + ADP + phosphate + H(+). The protein operates within purine metabolism; IMP biosynthesis via de novo pathway; 5-amino-1-(5-phospho-D-ribosyl)imidazole from N(2)-formyl-N(1)-(5-phospho-D-ribosyl)glycinamide: step 2/2. The sequence is that of Phosphoribosylformylglycinamidine cyclo-ligase from Caldicellulosiruptor saccharolyticus (strain ATCC 43494 / DSM 8903 / Tp8T 6331).